Here is a 376-residue protein sequence, read N- to C-terminus: Protein FAM199X (376 aa).

The span at 237-253 (YIKEHSPRQRSTRESWK) shows a compositional bias: basic and acidic residues. A disordered region spans residues 237-350 (YIKEHSPRQR…QRQARKERLS (114 aa)). Residues 255–300 (TSYSTASTSGVSGASVSSSSASMVSTASSTGSSGGNSASNSSANMS) are compositionally biased toward low complexity. The segment covering 318-337 (DSKKRSKQRKLQQKALRKRQ) has biased composition (basic residues). A coiled-coil region spans residues 320 to 349 (KKRSKQRKLQQKALRKRQLKEQRQARKERL). Positions 338–349 (LKEQRQARKERL) are enriched in basic and acidic residues.

This sequence belongs to the FAM199 family.

In Xenopus tropicalis (Western clawed frog), this protein is Protein FAM199X (fam199x).